The following is a 357-amino-acid chain: DNA replication and repair protein RecF (357 aa).

31-38 serves as a coordination point for ATP; the sequence is GQNGAGKT.

It belongs to the RecF family.

It is found in the cytoplasm. Its function is as follows. The RecF protein is involved in DNA metabolism; it is required for DNA replication and normal SOS inducibility. RecF binds preferentially to single-stranded, linear DNA. It also seems to bind ATP. In Coxiella burnetii (strain RSA 493 / Nine Mile phase I), this protein is DNA replication and repair protein RecF.